We begin with the raw amino-acid sequence, 220 residues long: CRIB domain-containing protein RIC3 (220 aa).

Positions 28 to 41 (IGFPTDVKHVAHIG) constitute a CRIB domain. The interval 39–220 (HIGSDGPATN…CNDNNISDKE (182 aa)) is disordered. Residues 61 to 77 (NENGQVVSRADANNNQI) show a composition bias toward polar residues. The segment covering 108–121 (NGSPPRRNSSASAS) has biased composition (low complexity). Basic residues-rich tracts occupy residues 127-136 (NTRRHHRSRH) and 172-184 (HSRKSTSRHRKPK). The span at 209 to 220 (DTCNDNNISDKE) shows a compositional bias: polar residues.

As to quaternary structure, interacts with ARAC11/ROP1. Expressed in flowers and pollen.

The protein resides in the cytoplasm. In terms of biological role, functions as a downstream effector of Rho-related GTP binding proteins of the 'Rho of Plants' (ROPs) family. Participates in the propagation of ROP GTPase signals in specific cellular responses. Functions as a downstream effector of ARAC11/ROP1 to activate calcium signaling that leads to F-actin disassembly associated with exocytosis in the tip of the growing pollen tube. Counteracts the ARAC11/ROP1-RIC4 pathway, which promotes apical F-actin assembly associated with vesicle accumulation, to control actin dynamics and pollen tube apical growth. The polypeptide is CRIB domain-containing protein RIC3 (RIC3) (Arabidopsis thaliana (Mouse-ear cress)).